A 108-amino-acid chain; its full sequence is DNA-binding protein HBbu (108 aa).

It belongs to the bacterial histone-like protein family.

Functionally, histone-like DNA-binding protein which is capable of wrapping DNA to stabilize it, and thus to prevent its denaturation under extreme environmental conditions. This chain is DNA-binding protein HBbu (hbb), found in Borrelia parkeri.